The primary structure comprises 552 residues: Thermosome subunit beta (552 aa).

A disordered region spans residues 531–552; the sequence is AGKKGGSEPGGKKEKEEKSSED. The segment covering 540–552 has biased composition (basic and acidic residues); sequence GGKKEKEEKSSED.

It belongs to the TCP-1 chaperonin family. Forms a heterooligomeric complex of two stacked nine-membered rings; one of alpha and the other of beta subunits. Sometimes called a 'rosettasome'.

The protein resides in the cytoplasm. The enzyme catalyses ATP + H2O = ADP + phosphate + H(+). Its function is as follows. Molecular chaperone; binds unfolded polypeptides in vitro, stimulates protein folding and has ATPase activity. One of the most abundant proteins in the cell at all temperatures. The protein is Thermosome subunit beta (thsB) of Saccharolobus shibatae (strain ATCC 51178 / DSM 5389 / JCM 8931 / NBRC 15437 / B12) (Sulfolobus shibatae).